The following is a 119-amino-acid chain: Large ribosomal subunit protein bL20 (119 aa).

Belongs to the bacterial ribosomal protein bL20 family.

Functionally, binds directly to 23S ribosomal RNA and is necessary for the in vitro assembly process of the 50S ribosomal subunit. It is not involved in the protein synthesizing functions of that subunit. This is Large ribosomal subunit protein bL20 from Geobacillus kaustophilus (strain HTA426).